A 149-amino-acid chain; its full sequence is SsrA-binding protein (149 aa).

The protein belongs to the SmpB family.

Its subcellular location is the cytoplasm. Its function is as follows. Required for rescue of stalled ribosomes mediated by trans-translation. Binds to transfer-messenger RNA (tmRNA), required for stable association of tmRNA with ribosomes. tmRNA and SmpB together mimic tRNA shape, replacing the anticodon stem-loop with SmpB. tmRNA is encoded by the ssrA gene; the 2 termini fold to resemble tRNA(Ala) and it encodes a 'tag peptide', a short internal open reading frame. During trans-translation Ala-aminoacylated tmRNA acts like a tRNA, entering the A-site of stalled ribosomes, displacing the stalled mRNA. The ribosome then switches to translate the ORF on the tmRNA; the nascent peptide is terminated with the 'tag peptide' encoded by the tmRNA and targeted for degradation. The ribosome is freed to recommence translation, which seems to be the essential function of trans-translation. In Fervidobacterium nodosum (strain ATCC 35602 / DSM 5306 / Rt17-B1), this protein is SsrA-binding protein.